The sequence spans 534 residues: Pentatricopeptide repeat-containing protein At2g20540 (534 aa).

11 PPR repeats span residues 41–71 (SSFMVTKMVDFCDKIEDMDYATRLFNQVSNP), 72–106 (NVFLYNSIIRAYTHNSLYCDVIRIYKQLLRKSFEL), 108–142 (DRFTFPFMFKSCASLGSCYLGKQVHGHLCKFGPRF), 143–173 (HVVTENALIDMYMKFDDLVDAHKVFDEMYER), 174–208 (DVISWNSLLSGYARLGQMKKAKGLFHLMLDKTIVS), 209–239 (WTAMISGYTGIGCYVEAMDFFREMQLAGIEP), 240–274 (DEISLISVLPSCAQLGSLELGKWIHLYAERRGFLK), 275–305 (QTGVCNALIEMYSKCGVISQAIQLFGQMEGK), 306–340 (DVISWSTMISGYAYHGNAHGAIETFNEMQRAKVKP), 341–371 (NGITFLGLLSACSHVGMWQEGLRYFDMMRQD), and 377–407 (KIEHYGCLIDVLARAGKLERAVEITKTMPMK). The segment at 412-487 (IWGSLLSSCR…TPGGSLIEVN (76 aa)) is type E motif. Residues 488 to 518 (NIVQEFVSGDNSKPFWTEISIVLQLFTSHQD) are type E(+) motif.

It belongs to the PPR family. PCMP-E subfamily.

The sequence is that of Pentatricopeptide repeat-containing protein At2g20540 (PCMP-E78) from Arabidopsis thaliana (Mouse-ear cress).